The primary structure comprises 59 residues: Large ribosomal subunit protein bL32 (59 aa).

Residues 1–16 (MAVPKRKVSPHRRGNR) show a composition bias toward basic residues. The disordered stretch occupies residues 1–20 (MAVPKRKVSPHRRGNRRAHD).

This sequence belongs to the bacterial ribosomal protein bL32 family.

The chain is Large ribosomal subunit protein bL32 from Erythrobacter litoralis (strain HTCC2594).